A 251-amino-acid polypeptide reads, in one-letter code: uncharacterized protein (251 aa).

To M.jannaschii MJ0638 and MJ1123 and M.tuberculosis Rv2003c.

This is an uncharacterized protein from Methanocaldococcus jannaschii (strain ATCC 43067 / DSM 2661 / JAL-1 / JCM 10045 / NBRC 100440) (Methanococcus jannaschii).